The primary structure comprises 518 residues: GMP synthase [glutamine-hydrolyzing] (518 aa).

In terms of domain architecture, Glutamine amidotransferase type-1 spans 11–203 (KIIVLDFGSQ…AFDVCQARSN (193 aa)). The Nucleophile role is filled by C88. Catalysis depends on residues H177 and E179. The GMPS ATP-PPase domain maps to 204–393 (WSMDDFIDMQ…LGMPHELVWR (190 aa)). Residue 231 to 237 (SGGVDSS) coordinates ATP.

As to quaternary structure, homodimer.

The catalysed reaction is XMP + L-glutamine + ATP + H2O = GMP + L-glutamate + AMP + diphosphate + 2 H(+). It participates in purine metabolism; GMP biosynthesis; GMP from XMP (L-Gln route): step 1/1. Functionally, catalyzes the synthesis of GMP from XMP. The polypeptide is GMP synthase [glutamine-hydrolyzing] (Ligilactobacillus salivarius (strain UCC118) (Lactobacillus salivarius)).